Here is a 1097-residue protein sequence, read N- to C-terminus: Putative regulator of nonsense transcripts 1 (1097 aa).

Residues 42–53 are compositionally biased toward low complexity; sequence SQTQTQGHTQSQ. Positions 42-67 are disordered; the sequence is SQTQTQGHTQSQLDNQLNGPDDGLHN. In terms of domain architecture, Upf1 CH-rich spans 96-254; that stretch reads TKDLPVHACR…NKLEELWKDN (159 aa). Zn(2+) is bound by residues C104, C108, C119, S122, C127, H137, H141, C147, C165, C168, C191, and C195. The C3H stretch occupies residues 104-137; it reads CRSYCGIHDPACVVYCNTSKKWFCNGRGNTSGSH. Positions 119 to 147 are CC/SHH/C; that stretch reads CNTSKKWFCNGRGNTSGSHIVNHLVRAKC. A C4 region spans residues 165–195; it reads CYNCGCRNVFLLGFIPAKADSVVVLLCRQPC. ATP contacts are provided by residues Q457, 474 to 481, Y683, and E813; that span reads GPPGTGKT. Residues 977–998 are disordered; sequence QGQTNGPAAGRGAMKGKSGRGG.

Belongs to the DNA2/NAM7 helicase family.

The protein resides in the cytoplasm. It is found in the P-body. The enzyme catalyses ATP + H2O = ADP + phosphate + H(+). Functionally, RNA-dependent helicase required for nonsense-mediated decay (NMD) of aberrant mRNAs containing premature stop codons and modulates the expression level of normal mRNAs. The formation of an rent1-rent2-rent3 surveillance complex is believed to activate NMD. The chain is Putative regulator of nonsense transcripts 1 (rent1) from Takifugu rubripes (Japanese pufferfish).